The primary structure comprises 362 residues: Beta-ketoacyl-[acyl-carrier-protein] synthase III 2 (362 aa).

Residues Cys113 and His251 contribute to the active site. An ACP-binding region spans residues 252 to 256; that stretch reads QANIR. Asn281 is a catalytic residue.

The protein belongs to the thiolase-like superfamily. FabH family. In terms of assembly, homodimer.

It localises to the cytoplasm. It catalyses the reaction malonyl-[ACP] + acetyl-CoA + H(+) = 3-oxobutanoyl-[ACP] + CO2 + CoA. It functions in the pathway lipid metabolism; fatty acid biosynthesis. In terms of biological role, catalyzes the condensation reaction of fatty acid synthesis by the addition to an acyl acceptor of two carbons from malonyl-ACP. Catalyzes the first condensation reaction which initiates fatty acid synthesis and may therefore play a role in governing the total rate of fatty acid production. Possesses both acetoacetyl-ACP synthase and acetyl transacylase activities. Its substrate specificity determines the biosynthesis of branched-chain and/or straight-chain of fatty acids. The sequence is that of Beta-ketoacyl-[acyl-carrier-protein] synthase III 2 from Vibrio vulnificus (strain YJ016).